Here is a 476-residue protein sequence, read N- to C-terminus: Neuropeptide-like precursor 1 (476 aa).

A signal peptide spans 1–34; the sequence is MNDAGASIGRHRGCLLLFVALAVAFSSYVEQVES. Val-133 carries the valine amide modification. 2 propeptides span residues 160–232 and 259–476; these read DEAT…NSYF and YVMP…RKNQ. 2 disordered regions span residues 275–298 and 360–385; these read QNDI…DGEV and PEVE…SHPT. Over residues 286–297 the composition is skewed to acidic residues; sequence DDDDDDDDDDGE.

Neuropeptide-like precursor 1-1: Expressed in antennal lobe (AL), corpora cardiaca (CC), corpora allata (CA) and gnathal ganglion (GNG) (at protein level). Expression in AL detected in all animals, in GNG in most animals, expression in CC and CA in few animals (at protein level). Neuropeptide-like precursor 1-2: Expressed in antennal lobe (AL), corpora cardiaca (CC), corpora allata (CA) and gnathal ganglion (GNG) (at protein level). Expression in AL detected in all animals, in GNG in some animals, expression in CC and CA in few animals (at protein level). Neuropeptide-like precursor 1-3: Not expressed in antennal lobe (AL), corpora cardiaca (CC), corpora allata (CA) and gnathal ganglion (GNG) (at protein level). Neuropeptide-like precursor 1-4: Expressed in antennal lobe (AL) and gnathal ganglion (GNG) (at protein level). Expression in AL detected in most animals, in GNG in some animals (at protein level). Not expressed in CC and CA (at protein level). YRVamide: Expressed in antennal lobe (AL), corpora cardiaca (CC), corpora allata (CA) and gnathal ganglion (GNG) (at protein level). Expression in AL and GNG detected in most animals, expression in CC and CA in few animals (at protein level). Extended YRVamide: Expressed in antennal lobe (AL) and gnathal ganglion (GNG) (at protein level). Expression in AL detected in most animals, in GNG in some animals (at protein level). Not expressed in corpora cardiaca (CC) and corpora allata (CA) (at protein level). Neuropeptide-like precursor 1-6: Expressed in antennal lobe (AL), corpora cardiaca (CC), corpora allata (CA) and gnathal ganglion (GNG) (at protein level). Expression in GNG detected in all animals, expression in AL in most animals, in CC and CA in few animals (at protein level). Neuropeptide-like precursor 1-6(1-11): Expressed in antennal lobe (AL) and gnathal ganglion (GNG) in most animals (at protein level). Not expressed in corpora cardiaca (CC) and corpora allata (CA) (at protein level). Neuropeptide-like precursor 1-9: Expressed in antennal lobe (AL) and gnathal ganglion (GNG) (at protein level). Expression in AL detected in all animals in GNG in most (at protein level). Not expressed in corpora cardiaca (CC) and corpora allata (CA) (at protein level).

Its subcellular location is the secreted. The protein is Neuropeptide-like precursor 1 of Agrotis ipsilon (Black cutworm moth).